Reading from the N-terminus, the 625-residue chain is Pyriculol/pyriculariol biosynthesis cluster transcription factor 1 (625 aa).

Disordered stretches follow at residues 1 to 83 (MATE…ATQD) and 466 to 496 (PMSA…LPAS). The segment covering 46–59 (TPSPSTPANPNSAS) has biased composition (low complexity). Positions 73-132 (KNQKRQRATQDQLTTLEQEFAKNPTPTATVRDRIAEEINMTERSVQIWFQNRRAKIKLMA) form a DNA-binding region, homeobox. Residues 467–496 (MSATTAPSPSEYNSPSFFSQAPENTPLPAS) are compositionally biased toward polar residues.

Its subcellular location is the nucleus. Transcriptional regulator; part of the gene cluster that mediates the biosynthesis of pyriculol and pyriculariol, two heptaketides that induce lesion formation upon application on rice leaves but are dispensable for pathogenicity. With TRF1, negatively regulates the expression of the gene cluster and the subsequent pyriculol and pyriculariol production. The protein is Pyriculol/pyriculariol biosynthesis cluster transcription factor 1 of Pyricularia oryzae (strain 70-15 / ATCC MYA-4617 / FGSC 8958) (Rice blast fungus).